The chain runs to 800 residues: MSRRRAHDTEDEGYDHRRNKRRRVSENQEIEDRLESLILRVGERSTSSVESNLEGLVSVLEADLGTFRLKILRILSDCAVRMPEKCTVYTTLVGLLNAKNYKFGGEFVDHMVKTFKESLKLCRWDAARYSLRFLADLVNCHVISATSLLQLLDTMIDVSNEDTVPQVRRDWFVFAVLSTLPWVGRDLYEKKESALESLLLRIEVYLNKRSKKHHNALRVWSSDAPHPQEEYLDCLWAQIRKLRQDNWAEKHIPRPYLVFDSILCEALQHNLPQIVPPSHHDAFEYPMPWVVYRMFDYTDCPDGPNLPGAHSIERFLIEEHLHHIIETYHHERKDCAAQLLSFPFKHKIPLEYCIVEVIFAELFHMPTPRYLDICYGSILIELCKLQPATLPQVLAQATEILFMRIDSMNTSCFDRFVNWFSYHLSNFKFTWSWDEWDSCLLLDAEHPRPKFIQEVLQKCLRLSYHQRITEMMPTTYLKLIPPTPSPNYKYANEEAANLPGTTVAHQLVVAIRQKCLPEEVVNILKEIPSSGYSGEEMSDGSFNALKIDVFVQTLLNLGSKSFSHSFAAISKFHSVFRALAETEEAQICILHNIFELWSTHQQMMVVLIDKLLKLQIVDCSAVATWIFSKEMTGEFTKMYLWEILHLTIKKMNKHVIKLNTELSEAKDKLSKADSSSSDSDDDTPHKRKKPITHADKPSEEVVERMEEKLEAANVNQKRLFLIVFQRFIMILSEHLLRSDTDGRDPDTDWYRWTIGRLQQVFLMHHEQVQKYSSTLETLLFTSDLDTHILEVFQQFVALRA.

A disordered region spans residues 1–26 (MSRRRAHDTEDEGYDHRRNKRRRVSE). T9 is modified (phosphothreonine). Positions 31-243 (EDRLESLILR…CLWAQIRKLR (213 aa)) constitute an MIF4G domain. The interval 669 to 699 (LSKADSSSSDSDDDTPHKRKKPITHADKPSE) is disordered.

The protein belongs to the NCBP1 family. Component of the nuclear cap-binding complex (CBC), a heterodimer composed of Cbp80 and Cbp20 that interacts with m7GpppG-capped RNA.

Its subcellular location is the nucleus. Its function is as follows. Component of the cap-binding complex (CBC), which binds cotranscriptionally to the 5'-cap of pre-mRNAs and is involved in various processes such as pre-mRNA splicing and RNA-mediated gene silencing (RNAi). The CBC complex is involved in miRNA-mediated RNA interference via its interaction with Ars2 and is required for primary microRNAs (miRNAs) processing. Also involved in innate immunity via the short interfering RNAs (siRNAs) processing machinery by restricting the viral RNA production. In the CBC complex, Cbp80 does not bind directly capped RNAs (m7GpppG-capped RNA) but is required to stabilize the movement of the N-terminal loop of Cbp20 and lock the CBC into a high affinity cap-binding state with the cap structure. This Drosophila ananassae (Fruit fly) protein is Nuclear cap-binding protein subunit 1 (Cbp80).